The following is a 404-amino-acid chain: Succinyl-diaminopimelate desuccinylase (404 aa).

H80 lines the Zn(2+) pocket. D82 is an active-site residue. D113 contributes to the Zn(2+) binding site. E147 serves as the catalytic Proton acceptor. E148, E176, and H373 together coordinate Zn(2+).

This sequence belongs to the peptidase M20A family. DapE subfamily. Homodimer. Requires Zn(2+) as cofactor. It depends on Co(2+) as a cofactor.

The catalysed reaction is N-succinyl-(2S,6S)-2,6-diaminopimelate + H2O = (2S,6S)-2,6-diaminopimelate + succinate. It functions in the pathway amino-acid biosynthesis; L-lysine biosynthesis via DAP pathway; LL-2,6-diaminopimelate from (S)-tetrahydrodipicolinate (succinylase route): step 3/3. Its function is as follows. Catalyzes the hydrolysis of N-succinyl-L,L-diaminopimelic acid (SDAP), forming succinate and LL-2,6-diaminopimelate (DAP), an intermediate involved in the bacterial biosynthesis of lysine and meso-diaminopimelic acid, an essential component of bacterial cell walls. The protein is Succinyl-diaminopimelate desuccinylase of Allorhizobium ampelinum (strain ATCC BAA-846 / DSM 112012 / S4) (Agrobacterium vitis (strain S4)).